The chain runs to 319 residues: tRNA dimethylallyltransferase (319 aa).

Residue 10 to 17 (GPTAVGKT) participates in ATP binding. 12 to 17 (TAVGKT) serves as a coordination point for substrate. The tract at residues 35 to 38 (DSMQ) is interaction with substrate tRNA.

Belongs to the IPP transferase family. As to quaternary structure, monomer. The cofactor is Mg(2+).

It catalyses the reaction adenosine(37) in tRNA + dimethylallyl diphosphate = N(6)-dimethylallyladenosine(37) in tRNA + diphosphate. Its function is as follows. Catalyzes the transfer of a dimethylallyl group onto the adenine at position 37 in tRNAs that read codons beginning with uridine, leading to the formation of N6-(dimethylallyl)adenosine (i(6)A). The chain is tRNA dimethylallyltransferase from Symbiobacterium thermophilum (strain DSM 24528 / JCM 14929 / IAM 14863 / T).